We begin with the raw amino-acid sequence, 333 residues long: Fructose-1,6-bisphosphatase class 1 1 (333 aa).

Residues glutamate 81, aspartate 100, leucine 102, and aspartate 103 each contribute to the Mg(2+) site. Substrate-binding positions include 103–106 (DGSS) and asparagine 191. Glutamate 263 contacts Mg(2+).

The protein belongs to the FBPase class 1 family. Homotetramer. Mg(2+) is required as a cofactor.

The protein localises to the cytoplasm. The catalysed reaction is beta-D-fructose 1,6-bisphosphate + H2O = beta-D-fructose 6-phosphate + phosphate. Its pathway is carbohydrate biosynthesis; Calvin cycle. The polypeptide is Fructose-1,6-bisphosphatase class 1 1 (Cereibacter sphaeroides (strain ATCC 17023 / DSM 158 / JCM 6121 / CCUG 31486 / LMG 2827 / NBRC 12203 / NCIMB 8253 / ATH 2.4.1.) (Rhodobacter sphaeroides)).